We begin with the raw amino-acid sequence, 164 residues long: Protein-export protein SecB (164 aa).

It belongs to the SecB family. As to quaternary structure, homotetramer, a dimer of dimers. One homotetramer interacts with 1 SecA dimer.

It localises to the cytoplasm. Its function is as follows. One of the proteins required for the normal export of preproteins out of the cell cytoplasm. It is a molecular chaperone that binds to a subset of precursor proteins, maintaining them in a translocation-competent state. It also specifically binds to its receptor SecA. This chain is Protein-export protein SecB, found in Chromohalobacter salexigens (strain ATCC BAA-138 / DSM 3043 / CIP 106854 / NCIMB 13768 / 1H11).